Consider the following 493-residue polypeptide: Solute carrier family 2, facilitated glucose transporter member 3 (493 aa).

The Cytoplasmic segment spans residues 1–10 (MGTTKVTPSL). The helical transmembrane segment at 11-32 (VFAVTVATIGSFQFGYNTGVIN) threads the bilayer. Residues 33–64 (APETILKDFLNYTLEERLEDLPSEGLLTALWS) lie on the Extracellular side of the membrane. Residue Asn43 is glycosylated (N-linked (GlcNAc...) asparagine). The helical transmembrane segment at 65–85 (LCVAIFSVGGMIGSFSVGLFV) threads the bilayer. Residues 86 to 90 (NRFGR) lie on the Cytoplasmic side of the membrane. A helical membrane pass occupies residues 91–111 (RNSMLLVNLLAIIAGCLMGFA). The Extracellular segment spans residues 112-118 (KIAESVE). A helical membrane pass occupies residues 119–142 (MLILGRLLIGIFCGLCTGFVPMYI). Residues 143 to 153 (GEVSPTALRGA) are Cytoplasmic-facing. A helical transmembrane segment spans residues 154–174 (FGTLNQLGIVVGILVAQIFGL). Gln159 contacts D-glucose. The Extracellular segment spans residues 175–183 (DFILGSEEL). The helical transmembrane segment at 184 to 204 (WPGLLGLTIIPAILQSAALPF) threads the bilayer. The Cytoplasmic portion of the chain corresponds to 205–269 (CPESPRFLLI…LFRSPNYVQP (65 aa)). A Phosphothreonine modification is found at Thr232. Residues 270–290 (LLISIVLQLSQQLSGINAVFY) form a helical membrane-spanning segment. The interval 277-279 (QLS) is important for selectivity against fructose. D-glucose-binding positions include 280–281 (QQ) and Asn286. Topologically, residues 291–304 (YSTGIFKDAGVQEP) are extracellular. A helical membrane pass occupies residues 305–325 (IYATIGAGVVNTIFTVVSLFL). Residue Asn315 coordinates D-glucose. The Cytoplasmic portion of the chain corresponds to 326-331 (VERAGR). Residues 332–352 (RTLHMIGLGGMAVCSVFMTIS) traverse the membrane as a helical segment. Topologically, residues 353-363 (LLLKDDYEAMS) are extracellular. Residues 364–389 (FVCIVAILIYVAFFEIGPGPIPWFIV) traverse the membrane as a helical segment. D-glucose is bound by residues Glu378 and Trp386. At 390 to 399 (AELFSQGPRP) the chain is on the cytoplasmic side. Residues 400 to 420 (AAIAVAGCCNWTSNFLVGMLF) form a helical membrane-spanning segment. The Extracellular portion of the chain corresponds to 421–429 (PSAAAYLGA). A helical membrane pass occupies residues 430-450 (YVFIIFAAFLIFFLIFTFFKV). At 451-493 (PETKGRTFEDIARAFEGQAHSGKGPAGVELNSMQPVKETPGNA) the chain is on the cytoplasmic side. Positions 469–493 (AHSGKGPAGVELNSMQPVKETPGNA) are disordered. Ser471 and Ser482 each carry phosphoserine. Position 489 is a phosphothreonine (Thr489).

It belongs to the major facilitator superfamily. Sugar transporter (TC 2.A.1.1) family. Glucose transporter subfamily. In terms of assembly, interacts with SMIM43; the interaction may promote SLC2A3-mediated glucose transport to meet the energy needs of mesendoderm differentiation. In terms of tissue distribution, expressed in spermatozoa (at protein level). Detected in brain (at protein level). Abundantly expressed in the hippocampus, cerebellum and cerebral cortex with lower expression in the dentate gyrus and piriform cortex.

It is found in the cell membrane. It localises to the perikaryon. The protein resides in the cell projection. It carries out the reaction D-glucose(out) = D-glucose(in). The catalysed reaction is D-galactose(in) = D-galactose(out). Its activity is regulated as follows. Deoxyglucose transport is inhibited by D-glucose, D-galactose and maltose. Galactose transport is inhibited by D-glucose and maltose. Its function is as follows. Facilitative glucose transporter. Can also mediate the uptake of various other monosaccharides across the cell membrane. Mediates the uptake of glucose, 2-deoxyglucose, galactose, mannose, xylose and fucose, and probably also dehydroascorbate. Does not mediate fructose transport. Required for mesendoderm differentiation. The protein is Solute carrier family 2, facilitated glucose transporter member 3 of Mus musculus (Mouse).